Consider the following 471-residue polypeptide: E3 ubiquitin-protein ligase TRIM38 (471 aa).

The RING-type zinc finger occupies 16 to 62 (CSICKAMMSHPVSINCGHSYCKSCIQSYYCNVSPKTGWKMLGCPLCS). The B box-type zinc finger occupies 90–131 (DQDMVCEEHEEKFNRFCEDDGQLLCWRCYWEDRHKGHTLAHV). Residues cysteine 95, histidine 98, cysteine 117, and histidine 123 each coordinate Zn(2+). Positions 276–471 (CNVSELYFDV…PLFLPAINNQ (196 aa)) constitute a B30.2/SPRY domain.

In terms of assembly, interacts (via B30.2/SPRY domain) with TAB2 and TAB3.

The protein resides in the cytoplasm. The catalysed reaction is S-ubiquitinyl-[E2 ubiquitin-conjugating enzyme]-L-cysteine + [acceptor protein]-L-lysine = [E2 ubiquitin-conjugating enzyme]-L-cysteine + N(6)-ubiquitinyl-[acceptor protein]-L-lysine.. It functions in the pathway protein modification; protein ubiquitination. Its pathway is protein modification; protein sumoylation. Functionally, E3 ubiquitin-protein and E3 SUMO-protein ligase that acts as a regulator of innate immunity. Acts as a negative regulator of type I interferon IFN-beta production by catalyzing 'Lys-48'-linked polyubiquitination of AZI2/NAP1, leading to its degradation. Mediates 'Lys-48'-linked polyubiquitination and proteasomal degradation of the critical TLR adapter TICAM1, inhibiting TLR3-mediated type I interferon signaling. Acts as a positive regulator of the cGAS-STING pathway by acting as a E3 SUMO-protein ligase: mediates sumoylation of CGAS and STING, preventing their degradation and thereby activating the innate immune response to DNA virus. Also acts as a negative regulator of NF-kappa-B signaling independently of its E3 protein ligase activity by promoting lysosome-dependent degradation of TAB2 and TAB3 adapters. This is E3 ubiquitin-protein ligase TRIM38 from Mus musculus (Mouse).